The chain runs to 205 residues: Large ribosomal subunit protein uL4 (205 aa).

The tract at residues 54–78 (GDISGTTAKPHRQKHTGRARQGSLR) is disordered. The segment covering 62–71 (KPHRQKHTGR) has biased composition (basic residues).

The protein belongs to the universal ribosomal protein uL4 family. As to quaternary structure, part of the 50S ribosomal subunit.

Functionally, one of the primary rRNA binding proteins, this protein initially binds near the 5'-end of the 23S rRNA. It is important during the early stages of 50S assembly. It makes multiple contacts with different domains of the 23S rRNA in the assembled 50S subunit and ribosome. In terms of biological role, forms part of the polypeptide exit tunnel. This Ehrlichia chaffeensis (strain ATCC CRL-10679 / Arkansas) protein is Large ribosomal subunit protein uL4.